Consider the following 229-residue polypeptide: Putative N-acetylmannosamine-6-phosphate 2-epimerase (229 aa).

It belongs to the NanE family.

It catalyses the reaction an N-acyl-D-glucosamine 6-phosphate = an N-acyl-D-mannosamine 6-phosphate. It participates in amino-sugar metabolism; N-acetylneuraminate degradation; D-fructose 6-phosphate from N-acetylneuraminate: step 3/5. In terms of biological role, converts N-acetylmannosamine-6-phosphate (ManNAc-6-P) to N-acetylglucosamine-6-phosphate (GlcNAc-6-P). In Escherichia coli O7:K1 (strain IAI39 / ExPEC), this protein is Putative N-acetylmannosamine-6-phosphate 2-epimerase.